The sequence spans 1454 residues: ABC transporter G family member 39 (1454 aa).

In terms of domain architecture, ABC transporter 1 spans 175 to 448 (LGFFHLLPSK…FEYFGFQCPE (274 aa)). 208 to 215 (GPPSSGKT) serves as a coordination point for ATP. An ABC transmembrane type-2 1 domain is found at 526–739 (ELFKACFDRE…GQTAIVMNEF (214 aa)). A run of 7 helical transmembrane segments spans residues 544–564 (FVYV…MTVY), 584–604 (MFFS…FTVM), 623–643 (FALP…GIWI), 663–683 (LLAY…LGAI), 689–709 (ISNS…GFII), 716–736 (PWMT…AIVM), and 775–795 (FWIC…FYIL). The segment covering 812–824 (EEGKDKQKGENRG) has biased composition (basic and acidic residues). The interval 812 to 838 (EEGKDKQKGENRGTEGSVVELNSSSNK) is disordered. Positions 853-1106 (LAFNNVNYYV…LVEYFEAVEG (254 aa)) constitute an ABC transporter 2 domain. 898–905 (GVSGAGKT) is a binding site for ATP. In terms of domain architecture, ABC transmembrane type-2 2 spans 1178–1392 (TQTKACFWKQ…TLYGLITSQV (215 aa)). Transmembrane regions (helical) follow at residues 1199-1219 (AIRF…FWQI), 1231-1251 (NFFG…AATV), 1285-1303 (IMYN…YSMI), 1312-1332 (FLWF…YGMM), 1342-1362 (IAGI…GFLI), 1367-1387 (IPIW…LYGL), and 1423-1443 (FLPV…FVFA).

The protein belongs to the ABC transporter superfamily. ABCG family. PDR (TC 3.A.1.205) subfamily.

Its subcellular location is the membrane. Its function is as follows. May be a general defense protein. The protein is ABC transporter G family member 39 (ABCG39) of Arabidopsis thaliana (Mouse-ear cress).